The primary structure comprises 405 residues: Replication factor C large subunit (405 aa).

Residue 47–54 (GPPGVGKT) participates in ATP binding.

This sequence belongs to the activator 1 small subunits family. RfcL subfamily. In terms of assembly, heteromultimer composed of small subunits (RfcS) and large subunits (RfcL).

Functionally, part of the RFC clamp loader complex which loads the PCNA sliding clamp onto DNA. In Saccharolobus islandicus (strain L.S.2.15 / Lassen #1) (Sulfolobus islandicus), this protein is Replication factor C large subunit.